Consider the following 84-residue polypeptide: Minor capsid protein P30 (84 aa).

In terms of assembly, dimer.

The protein resides in the virion. Minor capsid protein essential for stable capsid assembly of complete particles. The polypeptide is Minor capsid protein P30 (XXX) (Enterobacteria phage PRD1 (Bacteriophage PRD1)).